We begin with the raw amino-acid sequence, 100 residues long: Small ribosomal subunit protein uS14c (100 aa).

Belongs to the universal ribosomal protein uS14 family. Part of the 30S ribosomal subunit.

It is found in the plastid. Binds 16S rRNA, required for the assembly of 30S particles. The sequence is that of Small ribosomal subunit protein uS14c from Aneura mirabilis (Parasitic liverwort).